The primary structure comprises 666 residues: tRNA 5-methylaminomethyl-2-thiouridine biosynthesis bifunctional protein MnmC (666 aa).

Residues 1 to 245 (MKQYAIQPAT…KREMLCGVME (245 aa)) form a tRNA (mnm(5)s(2)U34)-methyltransferase region. Residues 270-666 (IGGGIASALL…RKLLKGKAVK (397 aa)) form an FAD-dependent cmnm(5)s(2)U34 oxidoreductase region.

It in the N-terminal section; belongs to the methyltransferase superfamily. tRNA (mnm(5)s(2)U34)-methyltransferase family. In the C-terminal section; belongs to the DAO family. FAD serves as cofactor.

The protein localises to the cytoplasm. It catalyses the reaction 5-aminomethyl-2-thiouridine(34) in tRNA + S-adenosyl-L-methionine = 5-methylaminomethyl-2-thiouridine(34) in tRNA + S-adenosyl-L-homocysteine + H(+). Catalyzes the last two steps in the biosynthesis of 5-methylaminomethyl-2-thiouridine (mnm(5)s(2)U) at the wobble position (U34) in tRNA. Catalyzes the FAD-dependent demodification of cmnm(5)s(2)U34 to nm(5)s(2)U34, followed by the transfer of a methyl group from S-adenosyl-L-methionine to nm(5)s(2)U34, to form mnm(5)s(2)U34. This chain is tRNA 5-methylaminomethyl-2-thiouridine biosynthesis bifunctional protein MnmC, found in Salmonella typhi.